A 184-amino-acid polypeptide reads, in one-letter code: Ribosome-recycling factor (184 aa).

Belongs to the RRF family.

Its subcellular location is the cytoplasm. Responsible for the release of ribosomes from messenger RNA at the termination of protein biosynthesis. May increase the efficiency of translation by recycling ribosomes from one round of translation to another. The polypeptide is Ribosome-recycling factor (Leptospira borgpetersenii serovar Hardjo-bovis (strain JB197)).